A 400-amino-acid chain; its full sequence is NADPH dehydrogenase 1 (400 aa).

The FMN site is built by threonine 38 and glutamine 115. The substrate site is built by histidine 192 and asparagine 195. The active-site Proton donor is the tyrosine 197. FMN-binding residues include arginine 244 and arginine 349. Substrate is bound at residue tyrosine 376.

Homodimer or heterodimer. FMN serves as cofactor.

The enzyme catalyses A + NADPH + H(+) = AH2 + NADP(+). Its function is as follows. Flavin-dependent enoate reductase that catalyzes the chemo- and stereoslective hydrogenation of electron-poor alkenes. The enzyme is reduced by NADPH, and oxygen, quinones, and alpha,beta-unsaturated aldehydes and ketones can act as electron acceptors to complete catalytic turnover. The physiological oxidant remains elusive. This is NADPH dehydrogenase 1 from Saccharomyces pastorianus (Lager yeast).